A 484-amino-acid chain; its full sequence is Glutamyl-tRNA(Gln) amidotransferase subunit A (484 aa).

Catalysis depends on charge relay system residues K74 and S149. The Acyl-ester intermediate role is filled by S173.

It belongs to the amidase family. GatA subfamily. As to quaternary structure, heterotrimer of A, B and C subunits.

It catalyses the reaction L-glutamyl-tRNA(Gln) + L-glutamine + ATP + H2O = L-glutaminyl-tRNA(Gln) + L-glutamate + ADP + phosphate + H(+). Functionally, allows the formation of correctly charged Gln-tRNA(Gln) through the transamidation of misacylated Glu-tRNA(Gln) in organisms which lack glutaminyl-tRNA synthetase. The reaction takes place in the presence of glutamine and ATP through an activated gamma-phospho-Glu-tRNA(Gln). This Prochlorococcus marinus subsp. pastoris (strain CCMP1986 / NIES-2087 / MED4) protein is Glutamyl-tRNA(Gln) amidotransferase subunit A.